Consider the following 418-residue polypeptide: Vasopressin V1a receptor (418 aa).

The disordered stretch occupies residues Met-1–Arg-43. At Met-1–Lys-52 the chain is on the extracellular side. The N-linked (GlcNAc...) asparagine glycan is linked to Asn-27. Residues Leu-53 to Leu-76 traverse the membrane as a helical segment. Over His-77 to Leu-88 the chain is Cytoplasmic. A helical membrane pass occupies residues Phe-89 to Cys-110. Topologically, residues Trp-111 to Arg-125 are extracellular. Cys-124 and Cys-203 are oxidised to a cystine. Residues Val-126–Ala-147 form a helical membrane-spanning segment. Residues Asp-148–Arg-168 lie on the Cytoplasmic side of the membrane. Residues Leu-169–Ser-190 traverse the membrane as a helical segment. The Extracellular portion of the chain corresponds to Met-191 to Thr-218. N-linked (GlcNAc...) asparagine glycosylation occurs at Asn-196. Residues Trp-219–Ile-239 traverse the membrane as a helical segment. The Cytoplasmic segment spans residues Cys-240 to Thr-293. Residues Phe-294–Trp-313 form a helical membrane-spanning segment. Topologically, residues Ser-314–Thr-331 are extracellular. The chain crosses the membrane as a helical span at residues Ile-332–Phe-351. Residues Ser-352 to Thr-418 lie on the Cytoplasmic side of the membrane. Residues Cys-365 and Cys-366 are each lipidated (S-palmitoyl cysteine). The tract at residues Asp-377 to Ser-410 is disordered. Polar residues predominate over residues Arg-383–Gly-399. Ser-404 is subject to Phosphoserine.

The protein belongs to the G-protein coupled receptor 1 family. Vasopressin/oxytocin receptor subfamily.

It localises to the cell membrane. In terms of biological role, receptor for arginine vasopressin. The activity of this receptor is mediated by G proteins which activate a phosphatidyl-inositol-calcium second messenger system. Has been involved in social behaviors, including affiliation and attachment. In Homo sapiens (Human), this protein is Vasopressin V1a receptor (AVPR1A).